Here is a 64-residue protein sequence, read N- to C-terminus: Tracheal antimicrobial peptide (64 aa).

The N-terminal stretch at 1–26 (MRLHHLLLALLFLVLSAWSGFTQGVG) is a signal peptide. Disulfide bonds link cysteine 31/cysteine 60, cysteine 38/cysteine 53, and cysteine 43/cysteine 61.

Belongs to the beta-defensin family. LAP/TAP subfamily. In terms of tissue distribution, tracheal epithelium.

The protein resides in the secreted. Has antibacterial activity in vitro against Escherichia coli, Staphylococcus aureus, Klebsiella pneumonia, and Pseudomonas aeruginosa. In addition, the peptide is active against Candida albicans, indicating a broad spectrum of activity. The sequence is that of Tracheal antimicrobial peptide from Bos taurus (Bovine).